The primary structure comprises 306 residues: CRISPR-associated endonuclease Cas1 (306 aa).

Mn(2+) is bound by residues glutamate 143, histidine 210, and aspartate 223.

The protein belongs to the CRISPR-associated endonuclease Cas1 family. As to quaternary structure, homodimer, forms a heterotetramer with a Cas2 homodimer. Mg(2+) is required as a cofactor. It depends on Mn(2+) as a cofactor.

In terms of biological role, CRISPR (clustered regularly interspaced short palindromic repeat), is an adaptive immune system that provides protection against mobile genetic elements (viruses, transposable elements and conjugative plasmids). CRISPR clusters contain spacers, sequences complementary to antecedent mobile elements, and target invading nucleic acids. CRISPR clusters are transcribed and processed into CRISPR RNA (crRNA). Acts as a dsDNA endonuclease. Involved in the integration of spacer DNA into the CRISPR cassette. In Geobacter sulfurreducens (strain ATCC 51573 / DSM 12127 / PCA), this protein is CRISPR-associated endonuclease Cas1.